The chain runs to 881 residues: Alanine--tRNA ligase (881 aa).

The Zn(2+) site is built by histidine 568, histidine 572, cysteine 670, and histidine 674.

It belongs to the class-II aminoacyl-tRNA synthetase family. Requires Zn(2+) as cofactor.

The protein resides in the cytoplasm. It catalyses the reaction tRNA(Ala) + L-alanine + ATP = L-alanyl-tRNA(Ala) + AMP + diphosphate. Its function is as follows. Catalyzes the attachment of alanine to tRNA(Ala) in a two-step reaction: alanine is first activated by ATP to form Ala-AMP and then transferred to the acceptor end of tRNA(Ala). Also edits incorrectly charged Ser-tRNA(Ala) and Gly-tRNA(Ala) via its editing domain. In Moorella thermoacetica (strain ATCC 39073 / JCM 9320), this protein is Alanine--tRNA ligase.